The chain runs to 104 residues: UPF0134 protein MPN_104 (104 aa).

Belongs to the UPF0134 family.

The sequence is that of UPF0134 protein MPN_104 from Mycoplasma pneumoniae (strain ATCC 29342 / M129 / Subtype 1) (Mycoplasmoides pneumoniae).